The primary structure comprises 92 residues: Small ribosomal subunit protein bS20 (92 aa).

A disordered region spans residues 1–23; the sequence is MANTTSAKKATRKIARRTDVNKA.

The protein belongs to the bacterial ribosomal protein bS20 family.

Binds directly to 16S ribosomal RNA. The protein is Small ribosomal subunit protein bS20 of Rhizobium leguminosarum bv. trifolii (strain WSM2304).